A 360-amino-acid chain; its full sequence is Bifunctional protein FolD 4, chloroplastic (360 aa).

The N-terminal 51 residues, 1-51, are a transit peptide targeting the chloroplast; the sequence is MASMMFTDCSSTTTSRLIHLNRSSGTFLLRQCVGQLRLQTTASGRGCCIRS. N-acetylserine is present on S52.

It belongs to the tetrahydrofolate dehydrogenase/cyclohydrolase family. In terms of assembly, homodimer.

The protein localises to the plastid. Its subcellular location is the chloroplast. The enzyme catalyses (6R)-5,10-methylene-5,6,7,8-tetrahydrofolate + NADP(+) = (6R)-5,10-methenyltetrahydrofolate + NADPH. It carries out the reaction (6R)-5,10-methenyltetrahydrofolate + H2O = (6R)-10-formyltetrahydrofolate + H(+). It functions in the pathway one-carbon metabolism; tetrahydrofolate interconversion. Functionally, catalyzes the oxidation of 5,10-methylenetetrahydrofolate to 5,10-methenyltetrahydrofolate and then the hydrolysis of 5,10-methenyltetrahydrofolate to 10-formyltetrahydrofolate. The chain is Bifunctional protein FolD 4, chloroplastic (FOLD4) from Arabidopsis thaliana (Mouse-ear cress).